The chain runs to 212 residues: Large ribosomal subunit protein uL4 (212 aa).

A compositionally biased stretch (polar residues) spans 54–65 (SQKSRSDVSGSN). The tract at residues 54 to 85 (SQKSRSDVSGSNKKPWRQKGTGRARSGSVKSP) is disordered.

It belongs to the universal ribosomal protein uL4 family. In terms of assembly, part of the 50S ribosomal subunit.

In terms of biological role, one of the primary rRNA binding proteins, this protein initially binds near the 5'-end of the 23S rRNA. It is important during the early stages of 50S assembly. It makes multiple contacts with different domains of the 23S rRNA in the assembled 50S subunit and ribosome. Its function is as follows. Forms part of the polypeptide exit tunnel. This chain is Large ribosomal subunit protein uL4, found in Blochmanniella floridana.